Reading from the N-terminus, the 64-residue chain is Short neurotoxin 1 (64 aa).

Disulfide bonds link Cys3/Cys26, Cys20/Cys43, Cys45/Cys56, and Cys57/Cys62.

Belongs to the three-finger toxin family. Short-chain subfamily. Type I alpha-neurotoxin sub-subfamily. In terms of tissue distribution, expressed by the venom gland.

The protein localises to the secreted. Functionally, binds to muscle nicotinic acetylcholine receptor (nAChR) and inhibit acetylcholine from binding to the receptor, thereby impairing neuromuscular transmission. The sequence is that of Short neurotoxin 1 from Bungarus fasciatus (Banded krait).